The chain runs to 242 residues: Ribosomal RNA large subunit methyltransferase E (242 aa).

Residues glycine 88, tryptophan 90, aspartate 111, aspartate 127, and aspartate 151 each coordinate S-adenosyl-L-methionine. Lysine 191 acts as the Proton acceptor in catalysis.

Belongs to the class I-like SAM-binding methyltransferase superfamily. RNA methyltransferase RlmE family.

The protein localises to the cytoplasm. It catalyses the reaction uridine(2552) in 23S rRNA + S-adenosyl-L-methionine = 2'-O-methyluridine(2552) in 23S rRNA + S-adenosyl-L-homocysteine + H(+). Its function is as follows. Specifically methylates the uridine in position 2552 of 23S rRNA at the 2'-O position of the ribose in the fully assembled 50S ribosomal subunit. The polypeptide is Ribosomal RNA large subunit methyltransferase E (Bartonella tribocorum (strain CIP 105476 / IBS 506)).